A 204-amino-acid chain; its full sequence is Recombination protein RecR (204 aa).

A C4-type zinc finger spans residues 58-75; sequence CSICQNITDLGTDPCLLC. The Toprim domain maps to 83–181; sequence SVICVVESPT…NVTRIARGIP (99 aa).

It belongs to the RecR family.

In terms of biological role, may play a role in DNA repair. It seems to be involved in an RecBC-independent recombinational process of DNA repair. It may act with RecF and RecO. In Chlorobaculum parvum (strain DSM 263 / NCIMB 8327) (Chlorobium vibrioforme subsp. thiosulfatophilum), this protein is Recombination protein RecR.